The following is a 415-amino-acid chain: Serine hydroxymethyltransferase (415 aa).

Residues Leu117 and 121–123 (GHL) contribute to the (6S)-5,6,7,8-tetrahydrofolate site. Lys226 is modified (N6-(pyridoxal phosphate)lysine). Glu241 contacts (6S)-5,6,7,8-tetrahydrofolate.

Belongs to the SHMT family. In terms of assembly, homodimer. The cofactor is pyridoxal 5'-phosphate.

It localises to the cytoplasm. It catalyses the reaction (6R)-5,10-methylene-5,6,7,8-tetrahydrofolate + glycine + H2O = (6S)-5,6,7,8-tetrahydrofolate + L-serine. The protein operates within one-carbon metabolism; tetrahydrofolate interconversion. It participates in amino-acid biosynthesis; glycine biosynthesis; glycine from L-serine: step 1/1. Functionally, catalyzes the reversible interconversion of serine and glycine with tetrahydrofolate (THF) serving as the one-carbon carrier. This reaction serves as the major source of one-carbon groups required for the biosynthesis of purines, thymidylate, methionine, and other important biomolecules. Also exhibits THF-independent aldolase activity toward beta-hydroxyamino acids, producing glycine and aldehydes, via a retro-aldol mechanism. The sequence is that of Serine hydroxymethyltransferase from Bacillus velezensis (strain DSM 23117 / BGSC 10A6 / LMG 26770 / FZB42) (Bacillus amyloliquefaciens subsp. plantarum).